We begin with the raw amino-acid sequence, 156 residues long: Small ribosomal subunit protein uS7 (156 aa).

It belongs to the universal ribosomal protein uS7 family. In terms of assembly, part of the 30S ribosomal subunit. Contacts proteins S9 and S11.

Its function is as follows. One of the primary rRNA binding proteins, it binds directly to 16S rRNA where it nucleates assembly of the head domain of the 30S subunit. Is located at the subunit interface close to the decoding center, probably blocks exit of the E-site tRNA. The protein is Small ribosomal subunit protein uS7 of Pectobacterium atrosepticum (strain SCRI 1043 / ATCC BAA-672) (Erwinia carotovora subsp. atroseptica).